A 286-amino-acid polypeptide reads, in one-letter code: Bifunctional protein FolD (286 aa).

NADP(+) contacts are provided by residues 165–167, serine 190, and valine 231; that span reads GRS.

The protein belongs to the tetrahydrofolate dehydrogenase/cyclohydrolase family. As to quaternary structure, homodimer.

The catalysed reaction is (6R)-5,10-methylene-5,6,7,8-tetrahydrofolate + NADP(+) = (6R)-5,10-methenyltetrahydrofolate + NADPH. The enzyme catalyses (6R)-5,10-methenyltetrahydrofolate + H2O = (6R)-10-formyltetrahydrofolate + H(+). It participates in one-carbon metabolism; tetrahydrofolate interconversion. Functionally, catalyzes the oxidation of 5,10-methylenetetrahydrofolate to 5,10-methenyltetrahydrofolate and then the hydrolysis of 5,10-methenyltetrahydrofolate to 10-formyltetrahydrofolate. In Bacillus cereus (strain ATCC 10987 / NRS 248), this protein is Bifunctional protein FolD.